Reading from the N-terminus, the 404-residue chain is Serine/threonine transporter SstT (404 aa).

Transmembrane regions (helical) follow at residues 11-31 (IINA…IILA), 44-64 (LGGL…FVLV), 82-102 (IISL…TMSF), 144-164 (TANY…LHHA), 179-199 (VSFI…GLVA), 218-238 (GVLL…MVFI), 290-310 (IPLG…VLTL), 316-336 (MGIQ…AISA), and 363-383 (VAMQ…SAET).

This sequence belongs to the dicarboxylate/amino acid:cation symporter (DAACS) (TC 2.A.23) family.

It is found in the cell inner membrane. It carries out the reaction L-serine(in) + Na(+)(in) = L-serine(out) + Na(+)(out). The catalysed reaction is L-threonine(in) + Na(+)(in) = L-threonine(out) + Na(+)(out). Functionally, involved in the import of serine and threonine into the cell, with the concomitant import of sodium (symport system). This chain is Serine/threonine transporter SstT, found in Desulfotalea psychrophila (strain LSv54 / DSM 12343).